The primary structure comprises 1140 residues: GPI inositol-deacylase (1140 aa).

Residues 1 to 84 are disordered; sequence MHRRSSGSSP…TTWASHDPPR (84 aa). Polar residues predominate over residues 55–78; that stretch reads GKSTPRSRNSSTWRTLSSATTTWA. Asn63 carries an N-linked (GlcNAc...) asparagine glycan. Residues 117–137 traverse the membrane as a helical segment; the sequence is SCSILTALTTILACVFLFSIV. The active site involves Ser304. A helical membrane pass occupies residues 782–802; it reads LVMRYRTVFAAFPLLVVSLTL. N-linked (GlcNAc...) asparagine glycosylation is present at Asn862. The next 7 membrane-spanning stretches (helical) occupy residues 882 to 902, 905 to 925, 952 to 972, 1002 to 1022, 1039 to 1059, 1070 to 1090, and 1094 to 1114; these read AFFWFLVPLFGLICVGVCVLL, VALIVLQILSVVYGLWNSKSG, VLLVLVSTAIPYQFAYLVACI, SVFILMLWVLPINILVLLVWA, VLSIMPFIILVETMTTGSMIP, SVLLFCIAVYSAVYGVSYAYI, and LVNILAGWLVSIYFFRSGFSL.

This sequence belongs to the GPI inositol-deacylase family.

The protein resides in the endoplasmic reticulum membrane. Involved in inositol deacylation of GPI-anchored proteins which plays important roles in the quality control and ER-associated degradation of GPI-anchored proteins. This is GPI inositol-deacylase (bst1) from Emericella nidulans (strain FGSC A4 / ATCC 38163 / CBS 112.46 / NRRL 194 / M139) (Aspergillus nidulans).